The primary structure comprises 308 residues: Glutaminase (308 aa).

Substrate is bound by residues serine 66, asparagine 117, glutamate 161, asparagine 168, tyrosine 192, tyrosine 244, and valine 262.

Belongs to the glutaminase family. In terms of assembly, homotetramer.

It catalyses the reaction L-glutamine + H2O = L-glutamate + NH4(+). This Salmonella agona (strain SL483) protein is Glutaminase.